Here is a 291-residue protein sequence, read N- to C-terminus: ATP synthase subunit a (291 aa).

6 helical membrane-spanning segments follow: residues 50–70, 108–128, 161–181, 203–223, 241–261, and 262–282; these read LDSM…FWIV, IAPL…MDLI, DPNI…FYSI, PVAK…TFLA, LIFI…SVPW, and AIFH…LTIV.

It belongs to the ATPase A chain family. F-type ATPases have 2 components, CF(1) - the catalytic core - and CF(0) - the membrane proton channel. CF(1) has five subunits: alpha(3), beta(3), gamma(1), delta(1), epsilon(1). CF(0) has three main subunits: a(1), b(2) and c(9-12). The alpha and beta chains form an alternating ring which encloses part of the gamma chain. CF(1) is attached to CF(0) by a central stalk formed by the gamma and epsilon chains, while a peripheral stalk is formed by the delta and b chains.

It is found in the cell inner membrane. Key component of the proton channel; it plays a direct role in the translocation of protons across the membrane. This chain is ATP synthase subunit a, found in Acinetobacter baumannii (strain SDF).